The following is a 291-amino-acid chain: MTATEELTFESTSRFAEVDVDGPLKLHYHEAGVGNDQTVVLLHGGGPGAASWTNFSRNIAVLARHFHVLAVDQPGYGHSDKRAEHGQFNRYAAMALKGLFDQLGLGRVPLVGNSLGGGTAVRFALDYPARAGRLVLMGPGGLSINLFAPDPTEGVKRLSKFSVAPTRENLEAFLRVMVYDKNLITPELVDQRFALASTPESLTATRAMGKSFAGADFEAGMMWREVYRLRQPVLLIWGREDRVNPLDGALVALKTIPRAQLHVFGQCGHWVQVEKFDEFNKLTIEFLGGGR.

Residues 45-46, asparagine 54, asparagine 113, leucine 115, and arginine 192 each bind substrate; that span reads GG. The Proton acceptor role is filled by histidine 269. Tryptophan 270 contributes to the substrate binding site.

Belongs to the AB hydrolase superfamily. HsaD family. As to quaternary structure, homodimer.

The enzyme catalyses (1E,2Z)-3-hydroxy-5,9,17-trioxo-4,5:9,10-disecoandrosta-1(10),2-dien-4-oate + H2O = 3-[(3aS,4S,7aS)-7a-methyl-1,5-dioxo-octahydro-1H-inden-4-yl]propanoate + (2Z,4Z)-2-hydroxyhexa-2,4-dienoate + H(+). It catalyses the reaction 2,6-dioxo-6-phenylhexa-3-enoate + H2O = 2-oxopent-4-enoate + benzoate + H(+). The protein operates within lipid metabolism; steroid biosynthesis. Functionally, catalyzes the hydrolysis of a carbon-carbon bond in 4,5: 9,10-diseco-3-hydroxy-5,9,17-trioxoandrosta-1(10),2-diene-4-oate (4,9-DSHA) to yield 9,17-dioxo-1,2,3,4,10,19-hexanorandrostan-5-oate (DOHNAA) and 2-hydroxy-hexa-2,4-dienoate (HHD). Is also able to catalyze the hydrolysis of 2-hydroxy-6-oxo-6-phenylhexa-2,4-dienoic acid (HOPDA) and the synthetic analog 8-(2-chlorophenyl)-2-hydroxy-5-methyl-6-oxoocta-2,4-dienoic acid (HOPODA). This is 4,5:9,10-diseco-3-hydroxy-5,9,17-trioxoandrosta-1(10),2-diene-4-oate hydrolase (hsaD) from Mycobacterium tuberculosis (strain ATCC 25618 / H37Rv).